Consider the following 377-residue polypeptide: Peroxisomal membrane protein PEX14 (377 aa).

A compositionally biased stretch (low complexity) spans 1 to 15; that stretch reads MASSEQAEQPSQPSS. Residues 1–24 are disordered; it reads MASSEQAEQPSQPSSTPGSENVLP. At Ala2 the chain carries N-acetylalanine. Residues 2–108 lie on the Peroxisomal matrix side of the membrane; the sequence is ASSEQAEQPS…YSPAGSRWRD (107 aa). Lys34 bears the N6-acetyllysine mark. Residues 109–126 traverse the membrane as a helical segment; that stretch reads YGALAIIMAGIAFGFHQL. The Cytoplasmic segment spans residues 127–377; it reads YKKYLLPLIL…EGASNESERD (251 aa). The segment at 230-377 is disordered; that stretch reads PPSPSAPKIP…EGASNESERD (148 aa). Ser232 carries the post-translational modification Phosphoserine. Composition is skewed to low complexity over residues 244 to 259 and 265 to 275; these read PVKS…VNHH and SPVSNESTSSS. Phosphoserine occurs at positions 282 and 335. Positions 323–342 are enriched in acidic residues; it reads KEDEEDEEDDDVSHVDEEDC. Residues 360–377 show a composition bias toward basic and acidic residues; that stretch reads QVEKLRRPEGASNESERD.

Belongs to the peroxin-14 family. As to quaternary structure, interacts with PEX13; forming the PEX13-PEX14 docking complex. Interacts with PEX5 (via WxxxF/Y motifs). Interacts with PEX19. Interacts with tubulin.

The protein localises to the peroxisome membrane. Functionally, component of the PEX13-PEX14 docking complex, a translocon channel that specifically mediates the import of peroxisomal cargo proteins bound to PEX5 receptor. The PEX13-PEX14 docking complex forms a large import pore which can be opened to a diameter of about 9 nm. Mechanistically, PEX5 receptor along with cargo proteins associates with the PEX14 subunit of the PEX13-PEX14 docking complex in the cytosol, leading to the insertion of the receptor into the organelle membrane with the concomitant translocation of the cargo into the peroxisome matrix. Plays a key role for peroxisome movement through a direct interaction with tubulin. The polypeptide is Peroxisomal membrane protein PEX14 (Homo sapiens (Human)).